Consider the following 600-residue polypeptide: Integrator complex subunit 11 (600 aa).

Residues histidine 68, histidine 70, aspartate 72, histidine 73, histidine 157, and aspartate 178 each coordinate Zn(2+). The HXHXDH motif signature appears at 68–73 (HFHLDH). Residue glutamate 203 is part of the active site. Histidine 414 contributes to the Zn(2+) binding site. The Nuclear localization signal signature appears at 469 to 479 (LLPDAKKPKLM).

This sequence belongs to the metallo-beta-lactamase superfamily. RNA-metabolizing metallo-beta-lactamase-like family. INTS11 subfamily. As to quaternary structure, component of the Integrator complex, composed of core subunits INTS1, INTS2, INTS3, INTS4, INTS5, INTS6, INTS7, INTS8, INTS9/RC74, INTS10, INTS11/CPSF3L, INTS12, INTS13, INTS14 and INTS15. The core complex associates with protein phosphatase 2A subunits PPP2CA and PPP2R1A, to form the Integrator-PP2A (INTAC) complex. INTS11 is part of the RNA endonuclease subcomplex, composed of INTS4, INTS9, INTS11 and inositol hexakisphosphate (InsP6). Zn(2+) serves as cofactor.

The protein localises to the nucleus. It is found in the cytoplasm. Functionally, RNA endonuclease component of the integrator complex, a multiprotein complex that terminates RNA polymerase II (Pol II) transcription in the promoter-proximal region of genes. The integrator complex provides a quality checkpoint during transcription elongation by driving premature transcription termination of transcripts that are unfavorably configured for transcriptional elongation: the complex terminates transcription by (1) catalyzing dephosphorylation of the C-terminal domain (CTD) of Pol II subunit POLR2A/RPB1 and SUPT5H/SPT5, (2) degrading the exiting nascent RNA transcript via endonuclease activity and (3) promoting the release of Pol II from bound DNA. The integrator complex is also involved in terminating the synthesis of non-coding Pol II transcripts, such as enhancer RNAs (eRNAs), small nuclear RNAs (snRNAs), telomerase RNAs and long non-coding RNAs (lncRNAs). Within the integrator complex, INTS11 constitutes the RNA endonuclease subunit that degrades exiting nascent RNA transcripts. This Gallus gallus (Chicken) protein is Integrator complex subunit 11 (INTS11).